We begin with the raw amino-acid sequence, 349 residues long: tRNA-specific 2-thiouridylase MnmA (349 aa).

Residues 7 to 14 and L33 each bind ATP; that span reads GLSGGVDS. C94 serves as the catalytic Nucleophile. Residues C94 and C193 are joined by a disulfide bond. G119 contributes to the ATP binding site. The tract at residues 143–145 is interaction with tRNA; it reads KDQ. The Cysteine persulfide intermediate role is filled by C193. The tract at residues 298 to 299 is interaction with tRNA; that stretch reads RY.

Belongs to the MnmA/TRMU family.

It is found in the cytoplasm. It carries out the reaction S-sulfanyl-L-cysteinyl-[protein] + uridine(34) in tRNA + AH2 + ATP = 2-thiouridine(34) in tRNA + L-cysteinyl-[protein] + A + AMP + diphosphate + H(+). Functionally, catalyzes the 2-thiolation of uridine at the wobble position (U34) of tRNA, leading to the formation of s(2)U34. In Rippkaea orientalis (strain PCC 8801 / RF-1) (Cyanothece sp. (strain PCC 8801)), this protein is tRNA-specific 2-thiouridylase MnmA.